The chain runs to 272 residues: Ethanolamine ammonia-lyase small subunit (272 aa).

The adenosylcob(III)alamin site is built by V161, E182, and C211.

The protein belongs to the EutC family. The basic unit is a heterodimer which dimerizes to form tetramers. The heterotetramers trimerize; 6 large subunits form a core ring with 6 small subunits projecting outwards. The cofactor is adenosylcob(III)alamin.

It is found in the bacterial microcompartment. The catalysed reaction is ethanolamine = acetaldehyde + NH4(+). It participates in amine and polyamine degradation; ethanolamine degradation. In terms of biological role, catalyzes the deamination of various vicinal amino-alcohols to oxo compounds. Allows this organism to utilize ethanolamine as the sole source of nitrogen and carbon in the presence of external vitamin B12. The sequence is that of Ethanolamine ammonia-lyase small subunit from Xanthomonas campestris pv. campestris (strain ATCC 33913 / DSM 3586 / NCPPB 528 / LMG 568 / P 25).